The primary structure comprises 242 residues: Orotidine 5'-phosphate decarboxylase (242 aa).

Residues aspartate 16, lysine 37, 64–73 (DLKFHDIPNT), threonine 128, arginine 190, glutamine 199, glycine 219, and arginine 220 contribute to the substrate site. Lysine 66 (proton donor) is an active-site residue.

The protein belongs to the OMP decarboxylase family. Type 1 subfamily. Homodimer.

The enzyme catalyses orotidine 5'-phosphate + H(+) = UMP + CO2. It functions in the pathway pyrimidine metabolism; UMP biosynthesis via de novo pathway; UMP from orotate: step 2/2. Functionally, catalyzes the decarboxylation of orotidine 5'-monophosphate (OMP) to uridine 5'-monophosphate (UMP). The protein is Orotidine 5'-phosphate decarboxylase of Prochlorococcus marinus (strain AS9601).